The chain runs to 180 residues: MSRIGKLPVKIPEKVKVSVDGNLVKVEGPKGKMSFPTNPRVKVAVDKGEVQVTRPDDSPESKGLHGLTRTLVKNALDGVVKGYERGLEINGVGFKAEVKGKEIHFALGFSHPVVFKLPEGVTAEVDAKQTKLTVKGVDKHVLGLTAAKIRALRPPEPYKGKGIKYAEEIIRRKEGKTGAA.

Belongs to the universal ribosomal protein uL6 family. As to quaternary structure, part of the 50S ribosomal subunit.

Functionally, this protein binds to the 23S rRNA, and is important in its secondary structure. It is located near the subunit interface in the base of the L7/L12 stalk, and near the tRNA binding site of the peptidyltransferase center. This is Large ribosomal subunit protein uL6 from Anaeromyxobacter sp. (strain Fw109-5).